The sequence spans 571 residues: Decapping 5-like protein (571 aa).

Residues Met-1–Pro-17 are compositionally biased toward low complexity. Disordered regions lie at residues Met-1–Asn-27, Leu-102–Tyr-141, Leu-159–Thr-187, and Ser-258–Gln-305. The Sm domain occupies Pro-25 to Pro-108. Polar residues-rich tracts occupy residues Val-104–Ile-138 and Thr-167–Thr-187. The segment covering Ser-264–Pro-279 has biased composition (low complexity). Residues Ser-293 to Gln-305 are compositionally biased toward polar residues. Residues Arg-419–Arg-455 enclose the DFDF domain. An FFD box motif is present at residues Pro-474 to Gln-489. The TFG box signature appears at Gln-498–Phe-518.

Belongs to the LSM14 family. In terms of assembly, homodimer. Component of the decapping complex.

The protein resides in the cytoplasm. It is found in the P-body. Functionally, as a component of the decapping complex, involved in the degradation of mRNAs. Promotes P-body formation. Translational repressor. The protein is Decapping 5-like protein (DCP5-L) of Arabidopsis thaliana (Mouse-ear cress).